The sequence spans 432 residues: MPEYVNWLRHASPYINAHRDCTFVVMLPGDGVEHPNFGNIVHDLVLLHSLGVRLVLVHGSRPQIEARLAARGLTPHYHHGLRITDAATLECVIDAVGQLRIAIEARLSMDMASSPMQGSRLRVASGNLVTARPIGVLEGVDYHHTGEVRRVDRKGINRLLDERSIVLLSPLGYSPTGETFNLACEDVATRAAIDLGADKLLLFGADPGLLDENGKLVRELRPQQVPAHLQRLGGNYQAELLDAAAEACRGGVGRSHIVSYAEDGALLTELFTRDGGGTLVAQEQFERVREAAIEDVGGLLELISPLEEQGILVRRSREVLEREIEQFSVVEREGMIIACAALYQIADSDAGELACLAVNPEYRHGKRGDELLERIETRARAQGLKTLFVLTTRTAHWFRERGFVPSSVERLPSARASLYNYQRNSKIFEKAL.

One can recognise an N-acetyltransferase domain in the interval 286–425 (ERVREAAIED…ASLYNYQRNS (140 aa)).

It belongs to the acetyltransferase family. ArgA subfamily.

It localises to the cytoplasm. It catalyses the reaction L-glutamate + acetyl-CoA = N-acetyl-L-glutamate + CoA + H(+). The protein operates within amino-acid biosynthesis; L-arginine biosynthesis; N(2)-acetyl-L-ornithine from L-glutamate: step 1/4. The polypeptide is Amino-acid acetyltransferase (Pseudomonas fluorescens (strain ATCC BAA-477 / NRRL B-23932 / Pf-5)).